A 231-amino-acid chain; its full sequence is MKVGIIGAMQQEVAILKEAMTNAQTVNKAGCTFYSGQINGVEVVLLQSGIGKVAAAIGTTILLDEYQPDMVLNTGSAGGFDSSLNLGDVVISTEVRHHDADVTAFGYEMGQMAGQPAAFLADEKLMNLAEKALEQMDGQHAVRGLICTGDAFVCTAERQAFIRQHFPSVIAVEMEASAIAQTCYQFKVPFVVVRAISDVADKESPMSFEEFLPLAAKSSSEMVFKMLELLK.

Catalysis depends on Glu12, which acts as the Proton acceptor. Substrate-binding positions include Gly78, Val153, and 174–175; that span reads ME. Residue Asp198 is the Proton donor of the active site.

The protein belongs to the PNP/UDP phosphorylase family. MtnN subfamily.

It catalyses the reaction S-adenosyl-L-homocysteine + H2O = S-(5-deoxy-D-ribos-5-yl)-L-homocysteine + adenine. The enzyme catalyses S-methyl-5'-thioadenosine + H2O = 5-(methylsulfanyl)-D-ribose + adenine. It carries out the reaction 5'-deoxyadenosine + H2O = 5-deoxy-D-ribose + adenine. The protein operates within amino-acid biosynthesis; L-methionine biosynthesis via salvage pathway; S-methyl-5-thio-alpha-D-ribose 1-phosphate from S-methyl-5'-thioadenosine (hydrolase route): step 1/2. Functionally, catalyzes the irreversible cleavage of the glycosidic bond in both 5'-methylthioadenosine (MTA) and S-adenosylhomocysteine (SAH/AdoHcy) to adenine and the corresponding thioribose, 5'-methylthioribose and S-ribosylhomocysteine, respectively. Also cleaves 5'-deoxyadenosine, a toxic by-product of radical S-adenosylmethionine (SAM) enzymes, into 5-deoxyribose and adenine. The chain is 5'-methylthioadenosine/S-adenosylhomocysteine nucleosidase from Vibrio vulnificus (strain CMCP6).